The primary structure comprises 554 residues: MRMAMSCGGRLVQRLDFSSSEEEDGLSNRINEAPQKGSPVSSWRTNNCPFPITPQRNERGLSPTQELSPSSDYSPDPSDKGVGGECPGTPLHYSTWKKLKLCDTPYTPKSLLYKTLPSPGSRVHCRGQRLLRFVAGTGAETEDPTLVNVNPFTPQSYRQTHFQPNGKRKERPEDDCSSDSQMKFTDKEHPAVFQSKRFVLRETNMESRYKTEFLEIEKIGAGEFGSVFKCVKRLDGCFYVIKRSKKPLAGSTDEQLALREVYAHAVLGHHPHVVRYYSAWAEDDHMIIQNEYCNGGSLQDLIMENNKKGQFVPEQELKEILLQVSMGLKYIHGSGLVHMDIKPSNIFICRKQTEVGEDESDGEDDVASASVLYKIGDLGHVTSILNPQVEEGDSRFLANEILQEDYRQLPKADIFALGLTIALAAGAAPLPCNEDGWHHIRKGNLPHIPQPLTPAFLALLKLLVHPDPATRPPATSLAKNSVLRRCVGKAAELQKQLNVEKFKTAMLERELQAAKLAQDECLDLPPVSGFSCRGRKRLVGAKNARSLSFTCGGY.

Disordered regions lie at residues 1-86 (MRMA…GGEC) and 145-182 (TLVNVNPFTPQSYRQTHFQPNGKRKERPEDDCSSDSQM). The residue at position 38 (Ser38) is a Phosphoserine. Composition is skewed to polar residues over residues 38–48 (SPVSSWRTNNC) and 147–163 (VNVNPFTPQSYRQTHFQ). The Protein kinase domain occupies 213 to 487 (FLEIEKIGAG…AKNSVLRRCV (275 aa)). ATP-binding positions include 219–227 (IGAGEFGSV) and Lys242. The Proton acceptor role is filled by Asp340. Residues Asn345 and Asp377 each contribute to the Mg(2+) site. Residues 490 to 516 (AAELQKQLNVEKFKTAMLERELQAAKL) adopt a coiled-coil conformation.

The protein belongs to the protein kinase superfamily. Ser/Thr protein kinase family. WEE1 subfamily. As to quaternary structure, interacts with cdca3. Ubiquitinated and degraded at the onset of G2/M phase. Post-translationally, phosphorylated during M and G1 phases. Interacts with cdca3 when phosphorylated at Ser-38.

Its subcellular location is the nucleus. The catalysed reaction is L-tyrosyl-[protein] + ATP = O-phospho-L-tyrosyl-[protein] + ADP + H(+). Its function is as follows. Oocyte and early embryo-specific protein tyrosine kinase that phosphorylates and inhibits cdk1 and acts as a regulator of meiosis in oocytes. Required to ensure the meiotic cell cycle in oocytes by phosphorylating cdk1 at 'Tyr-15', leading to inhibit cdk1 activity and prevent meiosis. This Xenopus laevis (African clawed frog) protein is Wee1-like protein kinase 2-B (wee2-b).